The sequence spans 88 residues: PTS system cellobiose-specific EIIB component (88 aa).

The region spanning 3–88 (KKRIYLFCSA…IDTLLYGKVD (86 aa)) is the PTS EIIB type-3 domain. Cys10 serves as the catalytic Phosphocysteine intermediate. Cys10 is subject to Phosphocysteine; by EIIA.

The protein resides in the cytoplasm. It catalyses the reaction D-cellobiose(out) + N(pros)-phospho-L-histidyl-[protein] = 6-phospho-beta-D-glucosyl-(1-&gt;4)-D-glucose(in) + L-histidyl-[protein]. The phosphoenolpyruvate-dependent sugar phosphotransferase system (sugar PTS), a major carbohydrate active transport system, catalyzes the phosphorylation of incoming sugar substrates concomitantly with their translocation across the cell membrane. The enzyme II CelABD PTS system is involved in cellobiose transport. The sequence is that of PTS system cellobiose-specific EIIB component from Aeromonas hydrophila.